Consider the following 152-residue polypeptide: Deoxyuridine 5'-triphosphate nucleotidohydrolase (152 aa).

Residues 71–73 (RSG), asparagine 84, and 88–90 (TID) contribute to the substrate site.

The protein belongs to the dUTPase family. Requires Mg(2+) as cofactor.

It carries out the reaction dUTP + H2O = dUMP + diphosphate + H(+). It functions in the pathway pyrimidine metabolism; dUMP biosynthesis; dUMP from dCTP (dUTP route): step 2/2. This enzyme is involved in nucleotide metabolism: it produces dUMP, the immediate precursor of thymidine nucleotides and it decreases the intracellular concentration of dUTP so that uracil cannot be incorporated into DNA. The chain is Deoxyuridine 5'-triphosphate nucleotidohydrolase from Roseobacter denitrificans (strain ATCC 33942 / OCh 114) (Erythrobacter sp. (strain OCh 114)).